A 284-amino-acid polypeptide reads, in one-letter code: Tropomyosin (284 aa).

Positions 1-284 (MDAIKKKMQA…DQTFQELFGY (284 aa)) form a coiled coil. Over residues 113–142 (LEKATHTADESDRVRKVMENRSFQDEERAN) the composition is skewed to basic and acidic residues. Residues 113-143 (LEKATHTADESDRVRKVMENRSFQDEERANT) form a disordered region.

Belongs to the tropomyosin family.

In terms of biological role, tropomyosin, in association with the troponin complex, plays a central role in the calcium dependent regulation of muscle contraction. This chain is Tropomyosin, found in Acanthocheilonema viteae (Filarial nematode worm).